A 255-amino-acid chain; its full sequence is F-box/SPRY domain-containing protein 1 (255 aa).

The region spanning 3 to 51 (DPVAALCNYNVLEVIFSYLELEDLSHCSQVCKSWYHFLNDENSDVWRWH) is the F-box domain. The B30.2/SPRY domain occupies 61–253 (LKSDLLSSVS…VSMVYLGTPL (193 aa)).

The protein belongs to the FBXO45/Fsn family. As to quaternary structure, component of an E3 ubiquitin ligase complex composed of hiw and Fsn.

It is found in the synapse. Its pathway is protein modification; protein ubiquitination. Functionally, required in the presynaptic motoneuron to down-regulate the levels of wnd and restrain synaptic terminal growth at the neuromuscular junction (NMJ). In Drosophila erecta (Fruit fly), this protein is F-box/SPRY domain-containing protein 1.